We begin with the raw amino-acid sequence, 162 residues long: Probable ergosterol biosynthetic protein 28 homolog (162 aa).

4 consecutive transmembrane segments (helical) span residues 7 to 25 (AWMSIVVVQAMGSVWMCYA), 40 to 60 (LSRAHALPLALLCILRIVLIF), 69 to 89 (IAHILLSILTAIHTMTEVFFY), and 96 to 116 (IVTVTEVTLNSFSVVVMLTFL).

The protein belongs to the ERG28 family. As to expression, expressed in tissues including muscles, intestine and neurons.

The protein localises to the endoplasmic reticulum membrane. The protein resides in the cell projection. It localises to the dendrite. Functionally, promotes the translocation of slo-1 potassium ion channels from the endoplasmic reticulum to its final destination at the plasma membrane, probably by shielding from premature proteasomal degradation in the endoplasmic reticulum. Maintains the levels of slo-1 potassium ion channel at the presynaptic neurons. This Caenorhabditis elegans protein is Probable ergosterol biosynthetic protein 28 homolog.